The sequence spans 483 residues: Prenyltransferase vrtC (483 aa).

Belongs to the tryptophan dimethylallyltransferase family.

The protein operates within secondary metabolite biosynthesis; terpenoid biosynthesis. Its function is as follows. Prenyltransferase; part of the gene cluster that mediates the biosynthesis of viridicatumtoxin, a tetracycline-like fungal meroterpenoid with a unique, fused spirobicyclic ring system. The first step of the pathway is the production of the malonamoyl-CoA starter unit for the polyketide synthase vrtA. The aldolase vrtJ may be involved in the synthesis of the malonamate substrate for malonamoyl-CoA synthetase vrtB. The polyketide synthase vrtA then may utilize the malonamoyl-CoA starter unit, followed by sequential condensation of eight malonyl-CoA units to form the polyketide backbone. The cyclization of the last ring could be mediated by the lactamase-like protein vrtG. The proposed post-PKS tailoring steps are a hydroxylation at C5 catalyzed the cytochrome P450 monooxygenase vrtE, a hydroxylation at C12a catalyzed by VrtH and/or VrtI, and an O-methylation by the O-methyltransferase vrtF. VrtC is then proposed to catalyze the transfer of a geranyl group synthesized by vrtD to the aromatic C ring of the tetracyclic polyketide intermediate of viridicatumtoxin to yield previridicatumtoxin. Finally, the cytochrome P450 monooxygenase vrtK catalyzes the spirocyclization of the geranyl moiety of previridicatumtoxin to afford viridicatumtoxin. This is Prenyltransferase vrtC from Penicillium aethiopicum.